Here is a 194-residue protein sequence, read N- to C-terminus: Transposon Tn2501 resolvase (194 aa).

The region spanning 3-143 is the Resolvase/invertase-type recombinase catalytic domain; sequence RVFAYCRVST…SGIARAKATG (141 aa). Residue Ser11 is the O-(5'-phospho-DNA)-serine intermediate of the active site. The segment at residues 170 to 189 is a DNA-binding region (H-T-H motif); that stretch reads ISAIAREFNTTRQTILRVKA.

This sequence belongs to the site-specific recombinase resolvase family.

Functionally, resolvase catalyzes the resolution (a site-specific recombination) of the cointegrated replicon to yield the final transposition products. The polypeptide is Transposon Tn2501 resolvase (tnpR) (Escherichia coli).